A 265-amino-acid polypeptide reads, in one-letter code: Type 1 encapsulin shell protein (265 aa).

The protein belongs to the encapsulin family. Family 1 subfamily. In terms of assembly, multimeric. The encapsulin nanocompartment is formed by 60 subunits. Monomers form pentamers which assemble to form shells. There are 12 pores where the pentamers meet as well as 3-fold axis channels and dimer channels; none are larger than 3-4 Angstroms in diameter. The N-terminus of the protein is inside the shell, the C-terminus is outside. Post-translationally, the initiator methionine is partially removed. When isolated from culture filtrate isoelectric focusing gives 3 bands, none of which are glycosylated.

It localises to the encapsulin nanocompartment. Its subcellular location is the secreted. The protein resides in the cell membrane. Its function is as follows. Shell component of a type 1 encapsulin nanocompartment in situ; its cargo protects against oxidative stress at low pH. In situ and in E.coli assembles into proteinaceous shells about 22 nm in diameter with 2.5 nm thick walls. Cargo proteins are targeted to the interior via their C-terminal extensions; empty intact shells can be isolated in E.coli in the absence of cargo protein. There are at least 4 possible cargo proteins, DyP (encoded in the same locus), FolB, BfrB and Rv1762c; DyP and Rv1762c have been identified in vivo. Probably involved in protection against oxidative damage from the host immune response. A T-cell antigen found in bacterial culture cell filtrates, stimulates mouse immune response. Does not have detectable bacteriocin activity. The sequence is that of Type 1 encapsulin shell protein from Mycobacterium tuberculosis (strain ATCC 25618 / H37Rv).